The sequence spans 826 residues: Villin-1 (826 aa).

Residues Met1–Asp734 form a core region. The stretch at Met27–Gly76 is one Gelsolin-like 1 repeat. Lys112 to Gln119 lines the a 1,2-diacyl-sn-glycero-3-phospho-(1D-myo-inositol-4,5-bisphosphate) pocket. The segment at Val129–Gln137 is crucial for binding an actin filament. Arg138–Lys146 contacts a 1,2-diacyl-sn-glycero-3-phospho-(1D-myo-inositol-4,5-bisphosphate). 5 Gelsolin-like repeats span residues Val148–Leu188, Leu265–Gln309, Gln408–Ala457, Thr528–Glu568, and Phe631–Glu672. The segment at Asn735–Phe826 is headpiece. The HP domain maps to Pro760–Phe826. Residues Lys820 to Lys823 form an absolutely required for activity region.

This sequence belongs to the villin/gelsolin family. Monomer. Homodimer. Associates with F-actin; the association with F-actin is inhibited by tropomyosin. In terms of processing, phosphorylated on tyrosine residues. The unphosphorylated form increases the initial rate of actin-nucleating activity, whereas the tyrosine-phosphorylated form inhibits actin-nucleating activity, enhances actin-bundling activity and enhances actin-severing activity by reducing high Ca(2+) requirements. The tyrosine-phosphorylated form does not regulate actin-capping activity. Tyrosine phosphorylation is essential for cell migration: tyrosine phosphorylation sites in the N-terminus half regulate actin reorganization and cell morphology, whereas tyrosine phosphorylation sites in the C-terminus half regulate cell migration. Tyrosine phosphorylation is induced by epidermal growth factor (EGF) and stimulates cell migration. Specifically expressed in epithelial cells. Component of brush border microvilli.

The protein resides in the cytoplasm. It localises to the cytoskeleton. The protein localises to the cell projection. It is found in the microvillus. Its subcellular location is the lamellipodium. The protein resides in the ruffle. It localises to the filopodium tip. The protein localises to the filopodium. Its function is as follows. Epithelial cell-specific Ca(2+)-regulated actin-modifying protein that modulates the reorganization of microvillar actin filaments. Plays a role in the actin nucleation, actin filament bundle assembly, actin filament capping and severing. Binds phosphatidylinositol 4,5-bisphosphate (PIP2) and lysophosphatidic acid (LPA); binds LPA with higher affinity than PIP2. Binding to LPA increases its phosphorylation by SRC and inhibits all actin-modifying activities. Binding to PIP2 inhibits actin-capping and -severing activities but enhances actin-bundling activity. Regulates the intestinal epithelial cell morphology, cell invasion, cell migration and apoptosis. Protects against apoptosis induced by dextran sodium sulfate (DSS) in the gastrointestinal epithelium. Appears to regulate cell death by maintaining mitochondrial integrity. Enhances hepatocyte growth factor (HGF)-induced epithelial cell motility, chemotaxis and wound repair. Its actin-bundling activity is inhibited by tropomyosin. This is Villin-1 (VIL1) from Gallus gallus (Chicken).